Reading from the N-terminus, the 122-residue chain is Prefoldin subunit 1 (122 aa).

A2 carries the N-acetylalanine modification.

This sequence belongs to the prefoldin subunit beta family. As to quaternary structure, heterohexamer of two PFD-alpha type and four PFD-beta type subunits.

In terms of biological role, binds specifically to cytosolic chaperonin (c-CPN) and transfers target proteins to it. Binds to nascent polypeptide chain and promotes folding in an environment in which there are many competing pathways for nonnative proteins. In Pongo abelii (Sumatran orangutan), this protein is Prefoldin subunit 1 (PFDN1).